The chain runs to 103 residues: Large ribosomal subunit protein bL21 (103 aa).

The protein belongs to the bacterial ribosomal protein bL21 family. Part of the 50S ribosomal subunit. Contacts protein L20.

This protein binds to 23S rRNA in the presence of protein L20. The chain is Large ribosomal subunit protein bL21 from Mycolicibacterium smegmatis (strain ATCC 700084 / mc(2)155) (Mycobacterium smegmatis).